Here is a 99-residue protein sequence, read N- to C-terminus: Small ribosomal subunit protein uS14m (99 aa).

It belongs to the universal ribosomal protein uS14 family.

It is found in the mitochondrion. This chain is Small ribosomal subunit protein uS14m (RPS14), found in Prototheca wickerhamii.